Reading from the N-terminus, the 350-residue chain is Phosphate acyltransferase (350 aa).

It belongs to the PlsX family. As to quaternary structure, homodimer. Probably interacts with PlsY.

The protein localises to the cytoplasm. The catalysed reaction is a fatty acyl-[ACP] + phosphate = an acyl phosphate + holo-[ACP]. The protein operates within lipid metabolism; phospholipid metabolism. Functionally, catalyzes the reversible formation of acyl-phosphate (acyl-PO(4)) from acyl-[acyl-carrier-protein] (acyl-ACP). This enzyme utilizes acyl-ACP as fatty acyl donor, but not acyl-CoA. This chain is Phosphate acyltransferase, found in Chelativorans sp. (strain BNC1).